Consider the following 426-residue polypeptide: Serine--tRNA ligase (426 aa).

229-231 is a binding site for L-serine; sequence TAE. An ATP-binding site is contributed by 260–262; it reads RSE. Glu283 contributes to the L-serine binding site. 347–350 contacts ATP; it reads EIAS. Ser383 is a binding site for L-serine.

It belongs to the class-II aminoacyl-tRNA synthetase family. Type-1 seryl-tRNA synthetase subfamily. Homodimer. The tRNA molecule binds across the dimer.

Its subcellular location is the cytoplasm. It carries out the reaction tRNA(Ser) + L-serine + ATP = L-seryl-tRNA(Ser) + AMP + diphosphate + H(+). It catalyses the reaction tRNA(Sec) + L-serine + ATP = L-seryl-tRNA(Sec) + AMP + diphosphate + H(+). Its pathway is aminoacyl-tRNA biosynthesis; selenocysteinyl-tRNA(Sec) biosynthesis; L-seryl-tRNA(Sec) from L-serine and tRNA(Sec): step 1/1. In terms of biological role, catalyzes the attachment of serine to tRNA(Ser). Is also able to aminoacylate tRNA(Sec) with serine, to form the misacylated tRNA L-seryl-tRNA(Sec), which will be further converted into selenocysteinyl-tRNA(Sec). In Rickettsia bellii (strain RML369-C), this protein is Serine--tRNA ligase.